The sequence spans 833 residues: DNA ligase (833 aa).

Residues 35 to 39 (DADYD), 84 to 85 (SL), and E115 contribute to the NAD(+) site. The active-site N6-AMP-lysine intermediate is K117. NAD(+) is bound by residues R138, E175, K292, and K316. 4 residues coordinate Zn(2+): C410, C413, C428, and C434. The region spanning 750 to 833 (LQTGPLDGQT…AFLGDHGQQP (84 aa)) is the BRCT domain.

This sequence belongs to the NAD-dependent DNA ligase family. LigA subfamily. It depends on Mg(2+) as a cofactor. Mn(2+) serves as cofactor.

The catalysed reaction is NAD(+) + (deoxyribonucleotide)n-3'-hydroxyl + 5'-phospho-(deoxyribonucleotide)m = (deoxyribonucleotide)n+m + AMP + beta-nicotinamide D-nucleotide.. Functionally, DNA ligase that catalyzes the formation of phosphodiester linkages between 5'-phosphoryl and 3'-hydroxyl groups in double-stranded DNA using NAD as a coenzyme and as the energy source for the reaction. It is essential for DNA replication and repair of damaged DNA. The sequence is that of DNA ligase from Xanthomonas euvesicatoria pv. vesicatoria (strain 85-10) (Xanthomonas campestris pv. vesicatoria).